The sequence spans 584 residues: tRNA-guanine(15) transglycosylase (584 aa).

D95 (nucleophile) is an active-site residue. Substrate contacts are provided by D130 and G196. The Zn(2+) site is built by C279, C281, and C284. Residues 507–582 form the PUA domain; sequence RMRVVVSEEA…RAVKVRRGIS (76 aa).

This sequence belongs to the archaeosine tRNA-ribosyltransferase family. The cofactor is Zn(2+).

It catalyses the reaction guanosine(15) in tRNA + 7-cyano-7-deazaguanine = 7-cyano-7-carbaguanosine(15) in tRNA + guanine. The protein operates within tRNA modification; archaeosine-tRNA biosynthesis. Functionally, exchanges the guanine residue with 7-cyano-7-deazaguanine (preQ0) at position 15 in the dihydrouridine loop (D-loop) of archaeal tRNAs. This Pyrococcus abyssi (strain GE5 / Orsay) protein is tRNA-guanine(15) transglycosylase.